The chain runs to 1372 residues: Polysaccharide lyase 8 family protein HylA (1372 aa).

An N-terminal signal peptide occupies residues 1–25; it reads MIKKIIVVVAFMLTGFSLTAMSASA. The 110-residue stretch at 63–172 folds into the F5/8 type C domain; sequence DGDETTRWSA…SIISFEAYEK (110 aa). Positions 183 to 242 constitute a BIG2 domain; it reads TENLTISEKRKQQLAFEVSPAGVDITEDQIEWSSSDPTIVTVDQTGNLTAVKSGEAKVTV. Active-site residues include His-487, Tyr-496, and Arg-550. FIVAR domains lie at 1014–1075, 1084–1146, 1155–1217, and 1226–1288; these read KEAL…VKQL, DKTN…VKQL, and DKTN…VKRL. The tract at residues 1288 to 1336 is disordered; it reads LTLKNSGENKKEQKNGGNNGHLNTSTGVDQTGTKQVKPSSQGGFRKASQ. Polar residues predominate over residues 1308–1329; it reads HLNTSTGVDQTGTKQVKPSSQG. The LPXTG sorting signal motif lies at 1338–1342; that stretch reads LPSTG. Pentaglycyl murein peptidoglycan amidated threonine is present on Thr-1341. Positions 1342–1372 are cleaved as a propeptide — removed by sortase; the sequence is GEKKSIALVIIGLLVIASGCLLVFRKSKSKK.

Belongs to the polysaccharide lyase 8 family.

It is found in the secreted. The protein localises to the cell wall. In terms of biological role, has a very modest degradation activity against heparin sodium salt (HS) in vitro. Involved in the pathogenesis of vancomycin-resistant E.faecalis infections. The protein is Polysaccharide lyase 8 family protein HylA of Enterococcus faecalis (strain ATCC 700802 / V583).